A 208-amino-acid polypeptide reads, in one-letter code: FMN-dependent NADH:quinone oxidoreductase (208 aa).

FMN-binding positions include S10, 16 to 18 (SVS), 94 to 97 (MYNF), and 138 to 141 (SRGG).

The protein belongs to the azoreductase type 1 family. As to quaternary structure, homodimer. It depends on FMN as a cofactor.

It catalyses the reaction 2 a quinone + NADH + H(+) = 2 a 1,4-benzosemiquinone + NAD(+). The catalysed reaction is N,N-dimethyl-1,4-phenylenediamine + anthranilate + 2 NAD(+) = 2-(4-dimethylaminophenyl)diazenylbenzoate + 2 NADH + 2 H(+). Quinone reductase that provides resistance to thiol-specific stress caused by electrophilic quinones. Its function is as follows. Also exhibits azoreductase activity. Catalyzes the reductive cleavage of the azo bond in aromatic azo compounds to the corresponding amines. The protein is FMN-dependent NADH:quinone oxidoreductase of Hyphomonas neptunium (strain ATCC 15444).